A 305-amino-acid chain; its full sequence is Glutaminase (305 aa).

7 residues coordinate substrate: Ser-63, Asn-113, Glu-158, Asn-165, Tyr-189, Tyr-241, and Val-259.

It belongs to the glutaminase family. In terms of assembly, homotetramer.

It catalyses the reaction L-glutamine + H2O = L-glutamate + NH4(+). This is Glutaminase from Aliarcobacter butzleri (strain RM4018) (Arcobacter butzleri).